The following is a 313-amino-acid chain: CRISPR-associated endonuclease Cas1 1 (313 aa).

Mn(2+)-binding residues include E144, H211, and D224. The tract at residues 288–313 (PPLDAPEAVDPVIPPEEPSGDDGHRG) is disordered.

This sequence belongs to the CRISPR-associated endonuclease Cas1 family. As to quaternary structure, homodimer, forms a heterotetramer with a Cas2 homodimer. Mg(2+) serves as cofactor. The cofactor is Mn(2+).

Its function is as follows. CRISPR (clustered regularly interspaced short palindromic repeat), is an adaptive immune system that provides protection against mobile genetic elements (viruses, transposable elements and conjugative plasmids). CRISPR clusters contain spacers, sequences complementary to antecedent mobile elements, and target invading nucleic acids. CRISPR clusters are transcribed and processed into CRISPR RNA (crRNA). Acts as a dsDNA endonuclease. Involved in the integration of spacer DNA into the CRISPR cassette. In Rhodospirillum rubrum (strain ATCC 11170 / ATH 1.1.1 / DSM 467 / LMG 4362 / NCIMB 8255 / S1), this protein is CRISPR-associated endonuclease Cas1 1.